The sequence spans 600 residues: 1-deoxy-D-xylulose-5-phosphate synthase (600 aa).

Thiamine diphosphate-binding positions include His-63 and Gly-104–Ser-106. Position 135 (Asp-135) interacts with Mg(2+). Residues Gly-136–Ala-137, Asn-164, Tyr-271, and Glu-352 each bind thiamine diphosphate. Asn-164 is a binding site for Mg(2+).

Belongs to the transketolase family. DXPS subfamily. As to quaternary structure, homodimer. Mg(2+) serves as cofactor. Requires thiamine diphosphate as cofactor.

It catalyses the reaction D-glyceraldehyde 3-phosphate + pyruvate + H(+) = 1-deoxy-D-xylulose 5-phosphate + CO2. It participates in metabolic intermediate biosynthesis; 1-deoxy-D-xylulose 5-phosphate biosynthesis; 1-deoxy-D-xylulose 5-phosphate from D-glyceraldehyde 3-phosphate and pyruvate: step 1/1. Its function is as follows. Catalyzes the acyloin condensation reaction between C atoms 2 and 3 of pyruvate and glyceraldehyde 3-phosphate to yield 1-deoxy-D-xylulose-5-phosphate (DXP). This chain is 1-deoxy-D-xylulose-5-phosphate synthase, found in Campylobacter fetus subsp. fetus (strain 82-40).